The sequence spans 359 residues: Pyruvate dehydrogenase E1 component subunit beta, mitochondrial (359 aa).

Residues 1–30 (MAAVSGLVRRPLREVSGLLKRRFHWTAPAA) constitute a mitochondrion transit peptide. At Tyr67 the chain carries Phosphotyrosine. Position 89 (Glu89) interacts with thiamine diphosphate. The K(+) site is built by Ile142, Ala190, Ile191, Asp193, and Asn195. N6-acetyllysine is present on Lys354.

Heterotetramer of two PDHA1 and two PDHB subunits. The heterotetramer interacts with DLAT, and is part of the multimeric pyruvate dehydrogenase complex that contains multiple copies of pyruvate dehydrogenase (E1), dihydrolipoamide acetyltransferase (DLAT, E2) and lipoamide dehydrogenase (DLD, E3). These subunits are bound to an inner core composed of about 48 DLAT and 12 PDHX molecules. Interacts with DLAT. Thiamine diphosphate is required as a cofactor.

The protein localises to the mitochondrion matrix. It carries out the reaction N(6)-[(R)-lipoyl]-L-lysyl-[protein] + pyruvate + H(+) = N(6)-[(R)-S(8)-acetyldihydrolipoyl]-L-lysyl-[protein] + CO2. Its function is as follows. The pyruvate dehydrogenase complex catalyzes the overall conversion of pyruvate to acetyl-CoA and CO(2), and thereby links the glycolytic pathway to the tricarboxylic cycle. The protein is Pyruvate dehydrogenase E1 component subunit beta, mitochondrial (PDHB) of Homo sapiens (Human).